A 1108-amino-acid polypeptide reads, in one-letter code: Lon protease homolog, mitochondrial (1108 aa).

The N-terminal 62 residues, 1–62, are a transit peptide targeting the mitochondrion; the sequence is MLRGQSLPWR…RAFSTSSIRR (62 aa). Disordered stretches follow at residues 24-192 and 299-318; these read PLLP…QKPS and LPPGEQSKAGNTEDKAPEKK. Residues 36-53 show a composition bias toward low complexity; the sequence is RSNLSISRLSRSPSLSPR. Composition is skewed to basic and acidic residues over residues 78–103 and 119–146; these read EQKDPNEQKDSDRSPEGRRRSPDSTG and KVAGEKEQRGVEEDAKKENVSIEGKSDP. Over residues 161 to 171 the composition is skewed to polar residues; the sequence is SDTKSSASNGG. Basic and acidic residues-rich tracts occupy residues 174–188 and 309–318; these read DGGRKGKKGSGDRAL and NTEDKAPEKK. A Lon N-terminal domain is found at 200–452; sequence VMAIPIAKRP…KALVVLKKEL (253 aa). 605–612 contributes to the ATP binding site; the sequence is GPPGVGKT. The span at 821 to 855 shows a compositional bias: basic and acidic residues; that stretch reads DKALTDEGKAAQEESKKETEEGDPKDPPADPEKST. The disordered stretch occupies residues 821-862; the sequence is DKALTDEGKAAQEESKKETEEGDPKDPPADPEKSTTETPRLA. In terms of domain architecture, Lon proteolytic spans 895–1081; sequence TFPPGVTMGL…SEVFNILFAE (187 aa). Residues serine 987 and lysine 1030 contribute to the active site.

Belongs to the peptidase S16 family. Homohexamer or homoheptamer. Organized in a ring with a central cavity.

It is found in the mitochondrion matrix. The catalysed reaction is Hydrolysis of proteins in presence of ATP.. In terms of biological role, ATP-dependent serine protease that mediates the selective degradation of misfolded, unassembled or oxidatively damaged polypeptides as well as certain short-lived regulatory proteins in the mitochondrial matrix. May also have a chaperone function in the assembly of inner membrane protein complexes. Participates in the regulation of mitochondrial gene expression and in the maintenance of the integrity of the mitochondrial genome. Binds to mitochondrial DNA in a site-specific manner. This Aspergillus fumigatus (strain ATCC MYA-4609 / CBS 101355 / FGSC A1100 / Af293) (Neosartorya fumigata) protein is Lon protease homolog, mitochondrial (pim1).